Consider the following 112-residue polypeptide: MTPGELFTDGPDHVLNAGRRTLTLVVQNTADRPIQVGSHYHFAETNAALGFDRQAAHGMRLNIASGTAVRFEPGQQRTVELVDYAGERKVFGFRGLVQGGLDASGQSHKETT.

This sequence belongs to the urease beta subunit family. As to quaternary structure, heterotrimer of UreA (gamma), UreB (beta) and UreC (alpha) subunits. Three heterotrimers associate to form the active enzyme.

The protein resides in the cytoplasm. The catalysed reaction is urea + 2 H2O + H(+) = hydrogencarbonate + 2 NH4(+). It participates in nitrogen metabolism; urea degradation; CO(2) and NH(3) from urea (urease route): step 1/1. In Polaromonas sp. (strain JS666 / ATCC BAA-500), this protein is Urease subunit beta.